We begin with the raw amino-acid sequence, 130 residues long: Small ribosomal subunit protein uS11 (130 aa).

The protein belongs to the universal ribosomal protein uS11 family. Part of the 30S ribosomal subunit.

Located on the platform of the 30S subunit. This is Small ribosomal subunit protein uS11 from Thermoplasma acidophilum (strain ATCC 25905 / DSM 1728 / JCM 9062 / NBRC 15155 / AMRC-C165).